A 237-amino-acid chain; its full sequence is Small ribosomal subunit protein uS2c (237 aa).

This sequence belongs to the universal ribosomal protein uS2 family.

The protein localises to the plastid. This Epifagus virginiana (Beechdrops) protein is Small ribosomal subunit protein uS2c (rps2).